Reading from the N-terminus, the 873-residue chain is Leucine--tRNA ligase (873 aa).

A 'HIGH' region motif is present at residues 42 to 52 (PYPSGKLHMGH). Positions 624–643 (PVEIGGTEKMSKSKNNGVDP) are disordered. Positions 632–636 (KMSKS) match the 'KMSKS' region motif. Lys-635 lines the ATP pocket.

Belongs to the class-I aminoacyl-tRNA synthetase family.

It localises to the cytoplasm. It catalyses the reaction tRNA(Leu) + L-leucine + ATP = L-leucyl-tRNA(Leu) + AMP + diphosphate. The chain is Leucine--tRNA ligase from Pseudomonas paraeruginosa (strain DSM 24068 / PA7) (Pseudomonas aeruginosa (strain PA7)).